Consider the following 475-residue polypeptide: Tetratricopeptide repeat protein 29 (475 aa).

TPR repeat units follow at residues aspartate 92–glutamate 131, phenylalanine 136–isoleucine 173, alanine 182–arginine 215, leucine 234–glycine 267, glycine 274–leucine 307, glycine 314–asparagine 347, and valine 354–leucine 387. Residues aspartate 436–threonine 475 are disordered. Positions glutamate 459–threonine 475 are enriched in basic and acidic residues.

It localises to the cytoplasm. The protein resides in the cytoskeleton. It is found in the flagellum axoneme. Axonemal protein which is implicated in axonemal and/or peri-axonemal structure assembly and regulates flagellum assembly and beating and therefore sperm motility. The chain is Tetratricopeptide repeat protein 29 (TTC29) from Macaca fascicularis (Crab-eating macaque).